The chain runs to 336 residues: tRNA N6-adenosine threonylcarbamoyltransferase (336 aa).

Residues histidine 111 and histidine 115 each coordinate Fe cation. Substrate is bound by residues 134–138 (LVSGG), aspartate 167, glycine 180, and asparagine 271. Aspartate 299 contributes to the Fe cation binding site.

Belongs to the KAE1 / TsaD family. It depends on Fe(2+) as a cofactor.

It localises to the cytoplasm. It carries out the reaction L-threonylcarbamoyladenylate + adenosine(37) in tRNA = N(6)-L-threonylcarbamoyladenosine(37) in tRNA + AMP + H(+). Functionally, required for the formation of a threonylcarbamoyl group on adenosine at position 37 (t(6)A37) in tRNAs that read codons beginning with adenine. Is involved in the transfer of the threonylcarbamoyl moiety of threonylcarbamoyl-AMP (TC-AMP) to the N6 group of A37, together with TsaE and TsaB. TsaD likely plays a direct catalytic role in this reaction. This is tRNA N6-adenosine threonylcarbamoyltransferase from Thioalkalivibrio sulfidiphilus (strain HL-EbGR7).